We begin with the raw amino-acid sequence, 124 residues long: Large ribosomal subunit protein bL12 (124 aa).

It belongs to the bacterial ribosomal protein bL12 family. Homodimer. Part of the ribosomal stalk of the 50S ribosomal subunit. Forms a multimeric L10(L12)X complex, where L10 forms an elongated spine to which 2 to 4 L12 dimers bind in a sequential fashion. Binds GTP-bound translation factors.

Its function is as follows. Forms part of the ribosomal stalk which helps the ribosome interact with GTP-bound translation factors. Is thus essential for accurate translation. The polypeptide is Large ribosomal subunit protein bL12 (Liberibacter africanus subsp. capensis).